Consider the following 299-residue polypeptide: MASSVWQTELPDLPEPKRGKVRDMYDLGDAYLMVATDRLSAFDVIMPDPIPDKGKVLTQISLFWFDVMKDIVDNHVLTAKVDEFPVKCRQYADILEGRSILVKKVQPQAIECVVRGYISGSGWSSYKKSQSVCGISLPEGLKESEKLPKTLFTPSTKAELGEHDENISFEKAAEIVGPETAEKLRDLSLAIYTKGADLANEKGIIIADTKFEFGTTDDGRIILIDEVLTPDSSRFWPKDQYEPGRAQDSFDKQFVRDYLLEIKFNKQPPGPKLPQEVLDKTRDKYLQALKLLAGDAYSI.

Belongs to the SAICAR synthetase family.

The enzyme catalyses 5-amino-1-(5-phospho-D-ribosyl)imidazole-4-carboxylate + L-aspartate + ATP = (2S)-2-[5-amino-1-(5-phospho-beta-D-ribosyl)imidazole-4-carboxamido]succinate + ADP + phosphate + 2 H(+). Its pathway is purine metabolism; IMP biosynthesis via de novo pathway; 5-amino-1-(5-phospho-D-ribosyl)imidazole-4-carboxamide from 5-amino-1-(5-phospho-D-ribosyl)imidazole-4-carboxylate: step 1/2. The polypeptide is Phosphoribosylaminoimidazole-succinocarboxamide synthase (Desulfatibacillum aliphaticivorans).